The sequence spans 285 residues: Probable endonuclease 4 (285 aa).

9 residues coordinate Zn(2+): H69, H109, E145, D179, H182, H216, D229, H231, and E261.

The protein belongs to the AP endonuclease 2 family. It depends on Zn(2+) as a cofactor.

The enzyme catalyses Endonucleolytic cleavage to 5'-phosphooligonucleotide end-products.. Functionally, endonuclease IV plays a role in DNA repair. It cleaves phosphodiester bonds at apurinic or apyrimidinic (AP) sites, generating a 3'-hydroxyl group and a 5'-terminal sugar phosphate. This Salmonella agona (strain SL483) protein is Probable endonuclease 4.